The following is a 203-amino-acid chain: Urease accessory protein UreG (203 aa).

14 to 21 provides a ligand contact to GTP; it reads GPVGSGKT.

It belongs to the SIMIBI class G3E GTPase family. UreG subfamily. In terms of assembly, homodimer. UreD, UreF and UreG form a complex that acts as a GTP-hydrolysis-dependent molecular chaperone, activating the urease apoprotein by helping to assemble the nickel containing metallocenter of UreC. The UreE protein probably delivers the nickel.

Its subcellular location is the cytoplasm. Its function is as follows. Facilitates the functional incorporation of the urease nickel metallocenter. This process requires GTP hydrolysis, probably effectuated by UreG. The chain is Urease accessory protein UreG from Rhizobium leguminosarum bv. viciae.